A 560-amino-acid polypeptide reads, in one-letter code: Radial spoke head protein 3 homolog (560 aa).

Disordered stretches follow at residues 134–186 (RKRG…EEPM) and 225–249 (ARKR…PVEG). Polar residues predominate over residues 153 to 162 (RAPSTYTYTS). The stretch at 215 to 239 (DSLELQRQREARKRALARKQAQEQL) forms a coiled coil. Threonine 286 carries the post-translational modification Phosphothreonine; by MAPK1. A coiled-coil region spans residues 331-385 (LEVMEEEELANLRASQREYEELRNSERAEVQRLEEQERRHREEKERRKKQQWEIM). Disordered stretches follow at residues 354–375 (NSER…EEKE), 473–498 (HGED…ESLE), and 526–560 (DRRS…EELS).

This sequence belongs to the flagellar radial spoke RSP3 family. Component of the axonemal radial spoke 1 (RS1) and 2 (RS2) complexes, at least composed of spoke head proteins RSPH1, RSPH3, RSPH9 and the cilia-specific component RSPH4A or sperm-specific component RSPH6A, spoke stalk proteins RSPH14, DNAJB13, DYDC1, ROPN1L and NME5, and the RS1 complex-specific anchor protein IQUB. Interacts with IQUB. Interacts with phosphorylated MAPK1. Interacts with MEK1. Interacts with PKA regulatory subunits PRKAR1A and PRKAR1B. Interacts with RSPH1. Interacts with RSPH4A. Interacts with RSPH6A. Interacts with RSPH9. Interacts with LRRC23.

It localises to the cytoplasm. The protein localises to the cytoskeleton. The protein resides in the cilium axoneme. Its subcellular location is the flagellum axoneme. Its function is as follows. Functions as part of axonemal radial spoke complexes that play an important part in the motility of sperm and cilia. Functions as a protein kinase A-anchoring protein that scaffolds the cAMP-dependent protein kinase holoenzyme. May serve as a point of convergence for MAPK and PKA signaling in cilia. This chain is Radial spoke head protein 3 homolog (RSPH3), found in Homo sapiens (Human).